We begin with the raw amino-acid sequence, 746 residues long: 4-hydroxy-3-methylbut-2-en-1-yl diphosphate synthase (flavodoxin) (746 aa).

4 residues coordinate [4Fe-4S] cluster: C653, C656, C687, and E694.

Belongs to the IspG family. Requires [4Fe-4S] cluster as cofactor.

It carries out the reaction (2E)-4-hydroxy-3-methylbut-2-enyl diphosphate + oxidized [flavodoxin] + H2O + 2 H(+) = 2-C-methyl-D-erythritol 2,4-cyclic diphosphate + reduced [flavodoxin]. It functions in the pathway isoprenoid biosynthesis; isopentenyl diphosphate biosynthesis via DXP pathway; isopentenyl diphosphate from 1-deoxy-D-xylulose 5-phosphate: step 5/6. In terms of biological role, converts 2C-methyl-D-erythritol 2,4-cyclodiphosphate (ME-2,4cPP) into 1-hydroxy-2-methyl-2-(E)-butenyl 4-diphosphate. The sequence is that of 4-hydroxy-3-methylbut-2-en-1-yl diphosphate synthase (flavodoxin) from Chlorobaculum tepidum (strain ATCC 49652 / DSM 12025 / NBRC 103806 / TLS) (Chlorobium tepidum).